The following is a 242-amino-acid chain: 1-(5-phosphoribosyl)-5-[(5-phosphoribosylamino)methylideneamino] imidazole-4-carboxamide isomerase (242 aa).

Asp-8 acts as the Proton acceptor in catalysis. The active-site Proton donor is Asp-129.

Belongs to the HisA/HisF family.

The protein localises to the cytoplasm. It carries out the reaction 1-(5-phospho-beta-D-ribosyl)-5-[(5-phospho-beta-D-ribosylamino)methylideneamino]imidazole-4-carboxamide = 5-[(5-phospho-1-deoxy-D-ribulos-1-ylimino)methylamino]-1-(5-phospho-beta-D-ribosyl)imidazole-4-carboxamide. Its pathway is amino-acid biosynthesis; L-histidine biosynthesis; L-histidine from 5-phospho-alpha-D-ribose 1-diphosphate: step 4/9. The polypeptide is 1-(5-phosphoribosyl)-5-[(5-phosphoribosylamino)methylideneamino] imidazole-4-carboxamide isomerase (Clostridium botulinum (strain Okra / Type B1)).